Here is a 1085-residue protein sequence, read N- to C-terminus: Carbamoyl phosphate synthase large chain (1085 aa).

Residues 1–399 form a carboxyphosphate synthetic domain region; that stretch reads MPKRTDISNI…ALQKALCSLE (399 aa). ATP is bound by residues R127, R167, G174, E206, L208, E213, G239, V240, H241, Q283, and E297. Residues 131-326 form the ATP-grasp 1 domain; the sequence is KEAMLKIGMD…IAKVATMLAV (196 aa). Q283, E297, and N299 together coordinate Mg(2+). Mn(2+) contacts are provided by Q283, E297, and N299. Residues 400–552 form an oligomerization domain region; sequence NNWLGFESLS…APNPLPPIEN (153 aa). Residues 553 to 951 form a carbamoyl phosphate synthetic domain region; sequence KQEKKEKKIL…AFFKAQTACF (399 aa). One can recognise an ATP-grasp 2 domain in the interval 678–871; it reads SLFLKELDIK…LAKVATRVMV (194 aa). 10 residues coordinate ATP: R714, K756, L758, E763, G788, I789, H790, S791, Q830, and E842. Mg(2+) contacts are provided by Q830, E842, and N844. Mn(2+)-binding residues include Q830, E842, and N844. The 134-residue stretch at 952 to 1085 folds into the MGS-like domain; it reads NPIKNKGLIF…ELLALQDYLK (134 aa). The allosteric domain stretch occupies residues 952–1085; that stretch reads NPIKNKGLIF…ELLALQDYLK (134 aa).

It belongs to the CarB family. In terms of assembly, composed of two chains; the small (or glutamine) chain promotes the hydrolysis of glutamine to ammonia, which is used by the large (or ammonia) chain to synthesize carbamoyl phosphate. Tetramer of heterodimers (alpha,beta)4. It depends on Mg(2+) as a cofactor. The cofactor is Mn(2+).

It catalyses the reaction hydrogencarbonate + L-glutamine + 2 ATP + H2O = carbamoyl phosphate + L-glutamate + 2 ADP + phosphate + 2 H(+). It carries out the reaction hydrogencarbonate + NH4(+) + 2 ATP = carbamoyl phosphate + 2 ADP + phosphate + 2 H(+). It participates in amino-acid biosynthesis; L-arginine biosynthesis; carbamoyl phosphate from bicarbonate: step 1/1. It functions in the pathway pyrimidine metabolism; UMP biosynthesis via de novo pathway; (S)-dihydroorotate from bicarbonate: step 1/3. In terms of biological role, large subunit of the glutamine-dependent carbamoyl phosphate synthetase (CPSase). CPSase catalyzes the formation of carbamoyl phosphate from the ammonia moiety of glutamine, carbonate, and phosphate donated by ATP, constituting the first step of 2 biosynthetic pathways, one leading to arginine and/or urea and the other to pyrimidine nucleotides. The large subunit (synthetase) binds the substrates ammonia (free or transferred from glutamine from the small subunit), hydrogencarbonate and ATP and carries out an ATP-coupled ligase reaction, activating hydrogencarbonate by forming carboxy phosphate which reacts with ammonia to form carbamoyl phosphate. This Helicobacter pylori (strain ATCC 700392 / 26695) (Campylobacter pylori) protein is Carbamoyl phosphate synthase large chain.